A 141-amino-acid chain; its full sequence is Large ribosomal subunit protein uL11 (141 aa).

It belongs to the universal ribosomal protein uL11 family. Part of the ribosomal stalk of the 50S ribosomal subunit. Interacts with L10 and the large rRNA to form the base of the stalk. L10 forms an elongated spine to which L12 dimers bind in a sequential fashion forming a multimeric L10(L12)X complex. In terms of processing, one or more lysine residues are methylated.

In terms of biological role, forms part of the ribosomal stalk which helps the ribosome interact with GTP-bound translation factors. The polypeptide is Large ribosomal subunit protein uL11 (Listeria innocua serovar 6a (strain ATCC BAA-680 / CLIP 11262)).